Here is a 381-residue protein sequence, read N- to C-terminus: MRDVSRSIQAQFRGALGRFALDAAFTVPATGITGLFGPSGCGKSTVLRCIAGLQQLPGSTFAIDGDVWQDASQFRQPHQRPIGYVFQEASLFAHLSVKANLLYGAPRDAAHARDSITFDEVIELLGLAALLERSPRHLSGGERQRVAIGRALLSQPKLLLMDEPLSALDRLTKDEILPFLERLHERLALPVIYVSHDMAEIERLADHLVLMRKGQVLAAGPLAALQSDPALPLAASRDAAVNFEATVEDYDPGYGLLTVAVDGGRLLVPAPPAQRGEHRRLRIAAGDVSLARELPHNTSILNVLPARIVSHNPLGDSEILVVLALGGNGEGARLLARVTRRSWDHLELADGIGLIAQVKGVALAPGRNTGTHASSPGLRGR.

In terms of domain architecture, ABC transporter spans 5–238 (SRSIQAQFRG…PALPLAASRD (234 aa)). ATP is bound at residue 37 to 44 (GPSGCGKS). In terms of domain architecture, Mop spans 297–367 (NTSILNVLPA…VKGVALAPGR (71 aa)).

The protein belongs to the ABC transporter superfamily. Molybdate importer (TC 3.A.1.8) family. The complex is composed of two ATP-binding proteins (ModC), two transmembrane proteins (ModB) and a solute-binding protein (ModA).

It localises to the cell inner membrane. The catalysed reaction is molybdate(out) + ATP + H2O = molybdate(in) + ADP + phosphate + H(+). In terms of biological role, part of the ABC transporter complex ModABC involved in molybdenum import. Responsible for energy coupling to the transport system. The sequence is that of Molybdenum import ATP-binding protein ModC from Rhodopseudomonas palustris (strain BisB18).